A 147-amino-acid polypeptide reads, in one-letter code: Phage-like element PBSX protein XkdM (147 aa).

This sequence to B.subtilis YqbM.

The polypeptide is Phage-like element PBSX protein XkdM (xkdM) (Bacillus subtilis (strain 168)).